We begin with the raw amino-acid sequence, 121 residues long: Flagellar hook-basal body complex protein FliE (121 aa).

The protein belongs to the FliE family.

It localises to the bacterial flagellum basal body. This is Flagellar hook-basal body complex protein FliE from Treponema denticola (strain ATCC 35405 / DSM 14222 / CIP 103919 / JCM 8153 / KCTC 15104).